Reading from the N-terminus, the 65-residue chain is Antimicrobial peptide THP1 (65 aa).

Residues 1 to 25 (MRIVYLLFPFILLLAQGAAGSSLAL) form the signal peptide. 3 cysteine pairs are disulfide-bonded: Cys31–Cys53, Cys38–Cys59, and Cys43–Cys60. The propeptide occupies 61–65 (KTLLG).

This sequence belongs to the beta-defensin family.

The protein resides in the secreted. Functionally, bactericidal activity; inhibits S.aureus and E.coli. This chain is Antimicrobial peptide THP1, found in Meleagris gallopavo (Wild turkey).